The sequence spans 338 residues: RNA 3'-terminal phosphate cyclase (338 aa).

Residues glutamine 103 and 283-287 (YLADQ) contribute to the ATP site. Catalysis depends on histidine 308, which acts as the Tele-AMP-histidine intermediate.

This sequence belongs to the RNA 3'-terminal cyclase family. Type 1 subfamily.

The protein resides in the cytoplasm. The enzyme catalyses a 3'-end 3'-phospho-ribonucleotide-RNA + ATP = a 3'-end 2',3'-cyclophospho-ribonucleotide-RNA + AMP + diphosphate. In terms of biological role, catalyzes the conversion of 3'-phosphate to a 2',3'-cyclic phosphodiester at the end of RNA. The mechanism of action of the enzyme occurs in 3 steps: (A) adenylation of the enzyme by ATP; (B) transfer of adenylate to an RNA-N3'P to produce RNA-N3'PP5'A; (C) and attack of the adjacent 2'-hydroxyl on the 3'-phosphorus in the diester linkage to produce the cyclic end product. The biological role of this enzyme is unknown but it is likely to function in some aspects of cellular RNA processing. This chain is RNA 3'-terminal phosphate cyclase, found in Shigella boydii serotype 18 (strain CDC 3083-94 / BS512).